We begin with the raw amino-acid sequence, 453 residues long: Chromosomal replication initiator protein DnaA (453 aa).

The interval 1–76 (MSGDAAALWP…LAWRQQLPAV (76 aa)) is domain I, interacts with DnaA modulators. A domain II region spans residues 76–115 (VRSVSVRGGVAATERAATLASVPLPTFDAPAAPAANPALL). The domain III, AAA+ region stretch occupies residues 116 to 333 (GFDPRLSFDR…GALNKLLAYA (218 aa)). Positions 160, 162, 163, and 164 each coordinate ATP. The tract at residues 334–453 (ALTGARIDLM…IAAIRRSLNS (120 aa)) is domain IV, binds dsDNA.

The protein belongs to the DnaA family. Oligomerizes as a right-handed, spiral filament on DNA at oriC.

The protein resides in the cytoplasm. Its function is as follows. Plays an essential role in the initiation and regulation of chromosomal replication. ATP-DnaA binds to the origin of replication (oriC) to initiate formation of the DNA replication initiation complex once per cell cycle. Binds the DnaA box (a 9 base pair repeat at the origin) and separates the double-stranded (ds)DNA. Forms a right-handed helical filament on oriC DNA; dsDNA binds to the exterior of the filament while single-stranded (ss)DNA is stabiized in the filament's interior. The ATP-DnaA-oriC complex binds and stabilizes one strand of the AT-rich DNA unwinding element (DUE), permitting loading of DNA polymerase. After initiation quickly degrades to an ADP-DnaA complex that is not apt for DNA replication. Binds acidic phospholipids. The chain is Chromosomal replication initiator protein DnaA from Sphingopyxis alaskensis (strain DSM 13593 / LMG 18877 / RB2256) (Sphingomonas alaskensis).